The following is a 258-amino-acid chain: Putative phosphoenolpyruvate synthase regulatory protein (258 aa).

146-153 (GVSRVGKT) contacts ADP.

It belongs to the pyruvate, phosphate/water dikinase regulatory protein family. PSRP subfamily.

It carries out the reaction [pyruvate, water dikinase] + ADP = [pyruvate, water dikinase]-phosphate + AMP + H(+). The enzyme catalyses [pyruvate, water dikinase]-phosphate + phosphate + H(+) = [pyruvate, water dikinase] + diphosphate. Functionally, bifunctional serine/threonine kinase and phosphorylase involved in the regulation of the phosphoenolpyruvate synthase (PEPS) by catalyzing its phosphorylation/dephosphorylation. This chain is Putative phosphoenolpyruvate synthase regulatory protein, found in Thiobacillus denitrificans (strain ATCC 25259 / T1).